A 99-amino-acid polypeptide reads, in one-letter code: Endothelin receptor type B (99 aa).

Topologically, residues 1-8 (PFGAEMCK) are extracellular. A disulfide bond links C7 and C88. The chain crosses the membrane as a helical span at residues 9–30 (LVPFIQKASVGITVLSLCALSI). At 31–51 (DRYRAVASWSRIKGIGIPKWT) the chain is on the cytoplasmic side. A helical transmembrane segment spans residues 52 to 76 (AVEIVLIWVVSVVLAVPEAIGFDMI). Residues 77-99 (TMDYKGSYLRICLLHPVQKTAFM) are Extracellular-facing.

This sequence belongs to the G-protein coupled receptor 1 family. Endothelin receptor subfamily. EDNRB sub-subfamily.

It localises to the cell membrane. Non-specific receptor for endothelin 1, 2, and 3. Mediates its action by association with G proteins that activate a phosphatidylinositol-calcium second messenger system. This chain is Endothelin receptor type B (EDNRB), found in Macaca fascicularis (Crab-eating macaque).